Consider the following 120-residue polypeptide: NAD(P)H-quinone oxidoreductase subunit 3, chloroplastic (120 aa).

The next 3 membrane-spanning stretches (helical) occupy residues 9–29 (IFWA…WISA), 64–84 (MFAL…PWAM), and 88–108 (VLGI…VVGL).

The protein belongs to the complex I subunit 3 family. NDH is composed of at least 16 different subunits, 5 of which are encoded in the nucleus.

It is found in the plastid. It localises to the chloroplast thylakoid membrane. The enzyme catalyses a plastoquinone + NADH + (n+1) H(+)(in) = a plastoquinol + NAD(+) + n H(+)(out). It carries out the reaction a plastoquinone + NADPH + (n+1) H(+)(in) = a plastoquinol + NADP(+) + n H(+)(out). NDH shuttles electrons from NAD(P)H:plastoquinone, via FMN and iron-sulfur (Fe-S) centers, to quinones in the photosynthetic chain and possibly in a chloroplast respiratory chain. The immediate electron acceptor for the enzyme in this species is believed to be plastoquinone. Couples the redox reaction to proton translocation, and thus conserves the redox energy in a proton gradient. The chain is NAD(P)H-quinone oxidoreductase subunit 3, chloroplastic from Oryza nivara (Indian wild rice).